Reading from the N-terminus, the 150-residue chain is UPF0178 protein Bpet3884 (150 aa).

The protein belongs to the UPF0178 family.

This Bordetella petrii (strain ATCC BAA-461 / DSM 12804 / CCUG 43448) protein is UPF0178 protein Bpet3884.